A 156-amino-acid chain; its full sequence is Transcriptional repressor NrdR (156 aa).

Residues 3-34 (CPKCNSTQSKVVDSRHADELNAIRRRRECENC) fold into a zinc finger. Positions 49 to 139 (LIVVKKDGTR…VYKEFKDVDQ (91 aa)) constitute an ATP-cone domain.

Belongs to the NrdR family. The cofactor is Zn(2+).

Functionally, negatively regulates transcription of bacterial ribonucleotide reductase nrd genes and operons by binding to NrdR-boxes. The sequence is that of Transcriptional repressor NrdR from Staphylococcus aureus (strain NCTC 8325 / PS 47).